Reading from the N-terminus, the 231-residue chain is Large ribosomal subunit protein uL1 (231 aa).

The protein belongs to the universal ribosomal protein uL1 family. In terms of assembly, part of the 50S ribosomal subunit.

In terms of biological role, binds directly to 23S rRNA. The L1 stalk is quite mobile in the ribosome, and is involved in E site tRNA release. Protein L1 is also a translational repressor protein, it controls the translation of the L11 operon by binding to its mRNA. The polypeptide is Large ribosomal subunit protein uL1 (Shouchella clausii (strain KSM-K16) (Alkalihalobacillus clausii)).